Here is a 98-residue protein sequence, read N- to C-terminus: Acylphosphatase (98 aa).

Residues 12–98 (RLSAWVHGHV…DATMTGFSER (87 aa)) form the Acylphosphatase-like domain. Residues R27 and N45 contribute to the active site.

The protein belongs to the acylphosphatase family.

The enzyme catalyses an acyl phosphate + H2O = a carboxylate + phosphate + H(+). In Mycolicibacterium smegmatis (strain ATCC 700084 / mc(2)155) (Mycobacterium smegmatis), this protein is Acylphosphatase (acyP).